A 209-amino-acid polypeptide reads, in one-letter code: Pyroglutamyl-peptidase 1 (209 aa).

Catalysis depends on residues glutamate 85, cysteine 149, and histidine 168.

The protein belongs to the peptidase C15 family. Monomer.

It localises to the cytoplasm. The catalysed reaction is Release of an N-terminal pyroglutamyl group from a polypeptide, the second amino acid generally not being Pro.. With respect to regulation, inhibited by transition metal ions including Ni(2+), Zn(2+), and Cu(2+) and by sulfhydryl-blocking agents. Removes 5-oxoproline from various penultimate amino acid residues except L-proline. This Homo sapiens (Human) protein is Pyroglutamyl-peptidase 1 (PGPEP1).